The chain runs to 116 residues: Small ribosomal subunit protein bS16 (116 aa).

The interval 88–116 is disordered; it reads RNNPKAAVPGKRMAELAKKKAERAAASAE. Over residues 99–110 the composition is skewed to basic and acidic residues; sequence RMAELAKKKAER.

The protein belongs to the bacterial ribosomal protein bS16 family.

In Cereibacter sphaeroides (strain ATCC 17025 / ATH 2.4.3) (Rhodobacter sphaeroides), this protein is Small ribosomal subunit protein bS16.